A 650-amino-acid chain; its full sequence is Chaperone protein DnaK (650 aa).

Thr200 carries the post-translational modification Phosphothreonine; by autocatalysis. Residues 611–634 (AQQAGAAGAAGAAAEGASAQGGAQ) show a composition bias toward low complexity. Residues 611 to 650 (AQQAGAAGAAGAAAEGASAQGGAQPPDDVVDADFKEVKKD) are disordered.

The protein belongs to the heat shock protein 70 family.

Its function is as follows. Acts as a chaperone. The chain is Chaperone protein DnaK from Burkholderia pseudomallei (strain 1710b).